A 398-amino-acid polypeptide reads, in one-letter code: Phytoene synthase, chloroplastic (398 aa).

Belongs to the phytoene/squalene synthase family. Monomer.

It localises to the plastid. The protein localises to the chloroplast. It catalyses the reaction 2 (2E,6E,10E)-geranylgeranyl diphosphate = 15-cis-phytoene + 2 diphosphate. It functions in the pathway carotenoid biosynthesis; phytoene biosynthesis; all-trans-phytoene from geranylgeranyl diphosphate: step 1/1. Catalyzes the reaction from prephytoene diphosphate to phytoene. This is Phytoene synthase, chloroplastic (PSY) from Daucus carota (Wild carrot).